Reading from the N-terminus, the 650-residue chain is MSVTPPNVQFNLNGDSDHKSDNSSSSLENKLDTELKITSPPRNPPQRLHPVDFSEHADTDDDMNHPLPRVQSPVHIKNHIDPKLAEDRYRSSAARHFEPISIPPSAITSEDEDDYHGSANSSTVLPPRTENALHAASPKPSGSTGYTSPALSQNSGSGGEGESDEGSFNTQHHRSPIFQAYPSSEDLVGDPNDPYRRTRRAPIKTNPHDIPSQFIFRKLGLHHGKHGHHGHSGSLSLKSLVPNHHDKHDKHDKHEKHHSSLDLRRFFKSHQKTDKEKKPSVSKSKSSANLQDDHFGLFKKYGKFGRMLGSGAGGSVRIMKRSSDGKIFAVKEFRARRPTETEREYARKVTAEFCIGSALHHTNIIETLDIVEENKKFYEVMEYAPYDMFSIVMSGKMTMPEVYCCFKQLLSGVAYLHSMGLAHRDLKLDNLVVDSNCFVKIIDFGSAVVFKYPFEADIVEATGVVGSDPYLAPETLVRKLYDPRAVDIWSSAIIFCCMALRRFPWKYPKLSDNSFRLFCMKQPSNDAESPSDILADIKKQRLVEQGCEPIRKTDESHSPNSKTDNSSTHKQELYGPWRLLRLLPRETRAVIAHMLELDPVKRYDIHRVFADNWINDISMCHMENGKVIHSPTHVHNLVASEESPAPPAKH.

A compositionally biased stretch (polar residues) spans 1–14 (MSVTPPNVQFNLNG). 2 disordered regions span residues 1 to 210 (MSVT…PHDI) and 222 to 288 (HHGK…KSSA). Phosphoserine is present on S72. Residues 78-98 (NHIDPKLAEDRYRSSAARHFE) show a composition bias toward basic and acidic residues. A compositionally biased stretch (polar residues) spans 140 to 154 (PSGSTGYTSPALSQN). Composition is skewed to basic residues over residues 222 to 231 (HHGKHGHHGH) and 245 to 257 (HDKHDKHDKHEKH). A compositionally biased stretch (basic and acidic residues) spans 258–279 (HSSLDLRRFFKSHQKTDKEKKP). S286 is modified (phosphoserine). Residues 302–614 (GKFGRMLGSG…IHRVFADNWI (313 aa)) form the Protein kinase domain. ATP contacts are provided by residues 308–316 (LGSGAGGSV) and K331. The Proton acceptor role is filled by D425. Residues 549–570 (PIRKTDESHSPNSKTDNSSTHK) form a disordered region.

It belongs to the protein kinase superfamily. Ser/Thr protein kinase family.

It localises to the cytoplasm. It carries out the reaction L-seryl-[protein] + ATP = O-phospho-L-seryl-[protein] + ADP + H(+). It catalyses the reaction L-threonyl-[protein] + ATP = O-phospho-L-threonyl-[protein] + ADP + H(+). In terms of biological role, overexpression causes cell cycle arrest. The protein is Serine/threonine-protein kinase oca2 of Schizosaccharomyces pombe (strain 972 / ATCC 24843) (Fission yeast).